A 247-amino-acid polypeptide reads, in one-letter code: Uridylate kinase (247 aa).

16–19 (KLSG) contributes to the ATP binding site. G58 serves as a coordination point for UMP. Residues G59 and R63 each contribute to the ATP site. UMP is bound by residues D78 and 139 to 146 (TGNPFFTT). 3 residues coordinate ATP: T166, Y172, and D175.

This sequence belongs to the UMP kinase family. Homohexamer.

The protein resides in the cytoplasm. The enzyme catalyses UMP + ATP = UDP + ADP. Its pathway is pyrimidine metabolism; CTP biosynthesis via de novo pathway; UDP from UMP (UMPK route): step 1/1. Its activity is regulated as follows. Inhibited by UTP. Its function is as follows. Catalyzes the reversible phosphorylation of UMP to UDP. The protein is Uridylate kinase of Xylella fastidiosa (strain Temecula1 / ATCC 700964).